The chain runs to 395 residues: uncharacterized protein (395 aa).

Helical transmembrane passes span 42-62, 67-87, 97-117, 128-148, 196-216, 241-261, and 281-301; these read LKYVLVYLLSIINAFLLLIFI, LYSFGISSLTQGFARLVFVLL, LIFNILYWLLYVFINIPLIIF, ILSTHFVVASNVFGFLISIIP, FIYAAIYGFYNGISVSLLYIL, ILFYVNSFILIIAILIGSFVA, and LFFSPNLIATFFSILLTGTVV.

The protein resides in the cell membrane. This is an uncharacterized protein from Mycoplasma genitalium (strain ATCC 33530 / DSM 19775 / NCTC 10195 / G37) (Mycoplasmoides genitalium).